Consider the following 84-residue polypeptide: Large ribosomal subunit protein bL27 (84 aa).

The segment at 1-22 (MAHKKAGGSTRNGRDSESKRLG) is disordered.

The protein belongs to the bacterial ribosomal protein bL27 family.

This Shewanella loihica (strain ATCC BAA-1088 / PV-4) protein is Large ribosomal subunit protein bL27.